Consider the following 156-residue polypeptide: Small ribosomal subunit protein uS7c (156 aa).

The protein belongs to the universal ribosomal protein uS7 family. Part of the 30S ribosomal subunit.

It is found in the plastid. It localises to the chloroplast. One of the primary rRNA binding proteins, it binds directly to 16S rRNA where it nucleates assembly of the head domain of the 30S subunit. The protein is Small ribosomal subunit protein uS7c (rps7) of Chara vulgaris (Common stonewort).